Reading from the N-terminus, the 851-residue chain is DNA mismatch repair protein MutS (851 aa).

602–609 (GPNMSGKS) contacts ATP.

The protein belongs to the DNA mismatch repair MutS family.

Functionally, this protein is involved in the repair of mismatches in DNA. It is possible that it carries out the mismatch recognition step. This protein has a weak ATPase activity. In Streptococcus pyogenes serotype M4 (strain MGAS10750), this protein is DNA mismatch repair protein MutS.